A 328-amino-acid polypeptide reads, in one-letter code: MITVGIDHGTSGITTCIKDNDKKIIFKLKRTELKEKSYLEELEKHISLEDIDLIALTYSMGDGINKILPIEKVKNRGVLSIEGAGEKVGGGTKVYDEIKESGLPAVVIPGLHRGIECLDERFRALYSHIASPEKVSIAYYAYKLFGFNDFVLSDISSNTVTLLIKDGKIFGGFDACIGAIGMLHGPIDLEMIRDIDAGKITANEAFSKAGAVKIAKLYKGVENTKEEIINNYFNDENCRLAVDSLILSVSMEINSLLPLLDKNKRRVVLAGSIGTLRNPIDIPKRIKEFVEAKIFVLYGESGAIGGALIAEDILKGKRDILGIEVEFK.

The protein belongs to the UPF0285 family.

This is UPF0285 protein MJ1370 from Methanocaldococcus jannaschii (strain ATCC 43067 / DSM 2661 / JAL-1 / JCM 10045 / NBRC 100440) (Methanococcus jannaschii).